A 179-amino-acid polypeptide reads, in one-letter code: Large ribosomal subunit protein uL5 (179 aa).

It belongs to the universal ribosomal protein uL5 family. In terms of assembly, part of the 50S ribosomal subunit; part of the 5S rRNA/L5/L18/L25 subcomplex. Contacts the 5S rRNA and the P site tRNA. Forms a bridge to the 30S subunit in the 70S ribosome.

Functionally, this is one of the proteins that bind and probably mediate the attachment of the 5S RNA into the large ribosomal subunit, where it forms part of the central protuberance. In the 70S ribosome it contacts protein S13 of the 30S subunit (bridge B1b), connecting the 2 subunits; this bridge is implicated in subunit movement. Contacts the P site tRNA; the 5S rRNA and some of its associated proteins might help stabilize positioning of ribosome-bound tRNAs. This chain is Large ribosomal subunit protein uL5, found in Buchnera aphidicola subsp. Cinara cedri (strain Cc).